The primary structure comprises 320 residues: ATP-dependent 6-phosphofructokinase (320 aa).

Residue glycine 12 coordinates ATP. Residue 22-26 (RGVVR) participates in ADP binding. ATP-binding positions include 73-74 (RF) and 103-106 (GDGS). Aspartate 104 provides a ligand contact to Mg(2+). 126 to 128 (TID) provides a ligand contact to substrate. Residue aspartate 128 is the Proton acceptor of the active site. Arginine 155 is a binding site for ADP. Residues arginine 163 and 170–172 (MGR) each bind substrate. ADP-binding positions include 186–188 (GCE), lysine 212, and 214–216 (KKH). Substrate contacts are provided by residues glutamate 223, arginine 244, and 250–253 (HIQR).

The protein belongs to the phosphofructokinase type A (PFKA) family. ATP-dependent PFK group I subfamily. Prokaryotic clade 'B1' sub-subfamily. As to quaternary structure, homotetramer. Mg(2+) serves as cofactor.

It is found in the cytoplasm. The catalysed reaction is beta-D-fructose 6-phosphate + ATP = beta-D-fructose 1,6-bisphosphate + ADP + H(+). It functions in the pathway carbohydrate degradation; glycolysis; D-glyceraldehyde 3-phosphate and glycerone phosphate from D-glucose: step 3/4. With respect to regulation, allosterically activated by ADP and other diphosphonucleosides, and allosterically inhibited by phosphoenolpyruvate. Catalyzes the phosphorylation of D-fructose 6-phosphate to fructose 1,6-bisphosphate by ATP, the first committing step of glycolysis. The polypeptide is ATP-dependent 6-phosphofructokinase (Photobacterium profundum (strain SS9)).